The primary structure comprises 272 residues: Enoyl-[acyl-carrier-protein] reductase [NADH] 1 (272 aa).

NAD(+)-binding positions include Gly17, 23-24, Gln44, 68-69, and Ile96; these read SI and DV. Active-site proton acceptor residues include Tyr149 and Tyr159. Residues Lys166 and 195 to 199 contribute to the NAD(+) site; that span reads IKTLA.

The protein belongs to the short-chain dehydrogenases/reductases (SDR) family. FabI subfamily.

It is found in the cell inner membrane. It carries out the reaction a 2,3-saturated acyl-[ACP] + NAD(+) = a (2E)-enoyl-[ACP] + NADH + H(+). Its pathway is lipid metabolism; fatty acid biosynthesis. This is Enoyl-[acyl-carrier-protein] reductase [NADH] 1 (fabI1) from Rhizobium meliloti (strain 1021) (Ensifer meliloti).